A 491-amino-acid chain; its full sequence is GTPase Der (491 aa).

EngA-type G domains are found at residues 54–217 (PVLA…PEYS) and 229–402 (RRIA…ESWD). Residues 60–67 (GRPNVGKS), 107–111 (DTGGW), 169–172 (NKVD), 235–242 (GRPNVGKS), 282–286 (DTAGI), and 347–350 (NKWD) contribute to the GTP site. Residues 403–485 (RRIPTGRLNA…PIEVNMRVRE (83 aa)) enclose the KH-like domain.

The protein belongs to the TRAFAC class TrmE-Era-EngA-EngB-Septin-like GTPase superfamily. EngA (Der) GTPase family. As to quaternary structure, associates with the 50S ribosomal subunit.

Its function is as follows. GTPase that plays an essential role in the late steps of ribosome biogenesis. This chain is GTPase Der, found in Paenarthrobacter aurescens (strain TC1).